The primary structure comprises 169 residues: dCTP pyrophosphatase 1 (169 aa).

The segment at 1–26 is disordered; it reads MSASEEMLGGARGESTTATGPFSFSS. The segment covering 14 to 26 has biased composition (polar residues); sequence ESTTATGPFSFSS. Substrate-binding positions include His37 and 46–50; that span reads WEQFH. Mg(2+)-binding residues include Glu62 and Glu65. A substrate-binding site is contributed by Trp72. Position 84 is a phosphoserine (Ser84). Mg(2+) contacts are provided by Glu94 and Asp97. Tyr101 is a binding site for substrate. The interval 143–169 is disordered; the sequence is LPHGATSENQAMGPADPASESTGQVST.

Homotetramer. Mg(2+) serves as cofactor.

The protein localises to the cytoplasm. Its subcellular location is the cytosol. It catalyses the reaction dCTP + H2O = dCMP + diphosphate + H(+). In terms of biological role, hydrolyzes deoxynucleoside triphosphates (dNTPs) to the corresponding nucleoside monophosphates. Has a strong preference for dCTP and its analogs including 5-iodo-dCTP and 5-methyl-dCTP for which it may even have a higher efficiency. May protect DNA or RNA against the incorporation of these genotoxic nucleotide analogs through their catabolism. The polypeptide is dCTP pyrophosphatase 1 (Bos taurus (Bovine)).